The primary structure comprises 398 residues: 1-deoxy-D-xylulose 5-phosphate reductoisomerase (398 aa).

6 residues coordinate NADPH: Thr-10, Gly-11, Ser-12, Ile-13, Asn-38, and Asn-124. Lys-125 contributes to the 1-deoxy-D-xylulose 5-phosphate binding site. Position 126 (Glu-126) interacts with NADPH. A Mn(2+)-binding site is contributed by Asp-150. Residues Ser-151, Glu-152, Ser-176, and His-199 each coordinate 1-deoxy-D-xylulose 5-phosphate. Glu-152 provides a ligand contact to Mn(2+). Gly-205 is a binding site for NADPH. Residues Ser-212, Asn-217, Lys-218, and Glu-221 each coordinate 1-deoxy-D-xylulose 5-phosphate. Glu-221 contacts Mn(2+).

This sequence belongs to the DXR family. It depends on Mg(2+) as a cofactor. Requires Mn(2+) as cofactor.

The catalysed reaction is 2-C-methyl-D-erythritol 4-phosphate + NADP(+) = 1-deoxy-D-xylulose 5-phosphate + NADPH + H(+). It participates in isoprenoid biosynthesis; isopentenyl diphosphate biosynthesis via DXP pathway; isopentenyl diphosphate from 1-deoxy-D-xylulose 5-phosphate: step 1/6. Catalyzes the NADPH-dependent rearrangement and reduction of 1-deoxy-D-xylulose-5-phosphate (DXP) to 2-C-methyl-D-erythritol 4-phosphate (MEP). The sequence is that of 1-deoxy-D-xylulose 5-phosphate reductoisomerase from Rippkaea orientalis (strain PCC 8801 / RF-1) (Cyanothece sp. (strain PCC 8801)).